Consider the following 277-residue polypeptide: Pantothenate synthetase (277 aa).

M26–H33 is an ATP binding site. H33 serves as the catalytic Proton donor. Residue Q57 participates in (R)-pantoate binding. Q57 is a beta-alanine binding site. Residue G143–D146 participates in ATP binding. Q149 lines the (R)-pantoate pocket. ATP is bound by residues V172 and L180–R183.

Belongs to the pantothenate synthetase family. In terms of assembly, homodimer.

It localises to the cytoplasm. It catalyses the reaction (R)-pantoate + beta-alanine + ATP = (R)-pantothenate + AMP + diphosphate + H(+). The protein operates within cofactor biosynthesis; (R)-pantothenate biosynthesis; (R)-pantothenate from (R)-pantoate and beta-alanine: step 1/1. Its function is as follows. Catalyzes the condensation of pantoate with beta-alanine in an ATP-dependent reaction via a pantoyl-adenylate intermediate. This Chloroflexus aggregans (strain MD-66 / DSM 9485) protein is Pantothenate synthetase.